We begin with the raw amino-acid sequence, 153 residues long: Glucose-6-phosphate 1-dehydrogenase (153 aa).

NADP(+)-binding residues include Arg-21 and Lys-120. Lys-120 provides a ligand contact to D-glucose 6-phosphate.

Belongs to the glucose-6-phosphate dehydrogenase family.

Its subcellular location is the cytoplasm. It is found in the cytosol. It catalyses the reaction D-glucose 6-phosphate + NADP(+) = 6-phospho-D-glucono-1,5-lactone + NADPH + H(+). Its pathway is carbohydrate degradation; pentose phosphate pathway; D-ribulose 5-phosphate from D-glucose 6-phosphate (oxidative stage): step 1/3. Its function is as follows. Cytosolic glucose-6-phosphate dehydrogenase that catalyzes the first and rate-limiting step of the oxidative branch within the pentose phosphate pathway/shunt, an alternative route to glycolysis for the dissimilation of carbohydrates and a major source of reducing power and metabolic intermediates for fatty acid and nucleic acid biosynthetic processes. This Drosophila simulans (Fruit fly) protein is Glucose-6-phosphate 1-dehydrogenase (Zw).